We begin with the raw amino-acid sequence, 84 residues long: UPF0410 protein YmgE (84 aa).

Helical transmembrane passes span Met1–Met21, Gly27–Ala47, and Gly58–Phe78.

This sequence belongs to the UPF0410 family.

It is found in the cell inner membrane. In Escherichia coli (strain K12), this protein is UPF0410 protein YmgE (ymgE).